Here is a 748-residue protein sequence, read N- to C-terminus: Bifunctional lysine-specific demethylase and histidyl-hydroxylase NO66 (748 aa).

Disordered regions lie at residues 65–135 (NIDR…RSTY) and 160–264 (TEVV…DDEG). A compositionally biased stretch (basic and acidic residues) spans 94–110 (LENKKPKVEVKKEDEKS). Residues 124 to 134 (LVQNETSTRST) show a composition bias toward polar residues. Residues 163 to 193 (VESDDEQMIGLDSDEELEDEDETDIDEDEMM) show a composition bias toward acidic residues. Residues 194–203 (IDPKDIERYI) show a composition bias toward basic and acidic residues. Residues 207-264 (SVEDEEDMEDEEIEDEEFEDEEFEDEEEEADEQEEEEEDVSDEESVVSEMDADSDDEG) are compositionally biased toward acidic residues. The region spanning 399–543 (QLVNPQTYDD…NLMEKVVPEA (145 aa)) is the JmjC domain. The Fe cation site is built by H442, D444, and H509.

Belongs to the ROX family. NO66 subfamily. Fe(2+) serves as cofactor.

Its subcellular location is the nucleus. The enzyme catalyses N(6),N(6)-dimethyl-L-lysyl(36)-[histone H3] + 2 2-oxoglutarate + 2 O2 = L-lysyl(36)-[histone H3] + 2 formaldehyde + 2 succinate + 2 CO2. Functionally, oxygenase that can act as both a histone lysine demethylase and a ribosomal histidine hydroxylase. Specifically demethylates 'Lys-4' (H3K4me) and 'Lys-36' (H3K36me) of histone H3, thereby playing a central role in histone code. Mediates response to multiple stress stimuli, including heat shock and osmotic, oxidative, and ethanol stress. The polypeptide is Bifunctional lysine-specific demethylase and histidyl-hydroxylase NO66 (jmjc-1) (Caenorhabditis elegans).